Reading from the N-terminus, the 385-residue chain is 8-amino-7-oxononanoate synthase (385 aa).

Arg-21 is a binding site for substrate. 108–109 (GF) is a binding site for pyridoxal 5'-phosphate. His-133 contributes to the substrate binding site. Ser-179, His-207, and Thr-233 together coordinate pyridoxal 5'-phosphate. Residue Lys-236 is modified to N6-(pyridoxal phosphate)lysine. Residue Thr-352 participates in substrate binding.

It belongs to the class-II pyridoxal-phosphate-dependent aminotransferase family. BioF subfamily. As to quaternary structure, homodimer. It depends on pyridoxal 5'-phosphate as a cofactor.

It catalyses the reaction 6-carboxyhexanoyl-[ACP] + L-alanine + H(+) = (8S)-8-amino-7-oxononanoate + holo-[ACP] + CO2. The protein operates within cofactor biosynthesis; biotin biosynthesis. Its function is as follows. Catalyzes the decarboxylative condensation of pimeloyl-[acyl-carrier protein] and L-alanine to produce 8-amino-7-oxononanoate (AON), [acyl-carrier protein], and carbon dioxide. The polypeptide is 8-amino-7-oxononanoate synthase (Pseudescherichia vulneris (Escherichia vulneris)).